The chain runs to 81 residues: MSHKVKIYDTCIGCTQCVRACPLDVLEMVPWDGCKAAQIASSPRTEDCVGCKRCETACPTDFLSIRVYLGAETTRSMGLAY.

2 consecutive 4Fe-4S ferredoxin-type domains span residues 1–31 and 39–68; these read MSHK…MVPW and IASS…IRVY. Residues C11, C14, C17, C21, C48, C51, C54, and C58 each contribute to the [4Fe-4S] cluster site.

As to quaternary structure, the cyanobacterial PSI reaction center is composed of one copy each of PsaA,B,C,D,E,F,I,J,K,L,M and X, and forms trimeric complexes. [4Fe-4S] cluster is required as a cofactor.

The protein resides in the cellular thylakoid membrane. The enzyme catalyses reduced [plastocyanin] + hnu + oxidized [2Fe-2S]-[ferredoxin] = oxidized [plastocyanin] + reduced [2Fe-2S]-[ferredoxin]. Functionally, apoprotein for the two 4Fe-4S centers FA and FB of photosystem I (PSI); essential for photochemical activity. FB is the terminal electron acceptor of PSI, donating electrons to ferredoxin. The C-terminus interacts with PsaA/B/D and helps assemble the protein into the PSI complex. Required for binding of PsaD and PsaE to PSI. PSI is a plastocyanin/cytochrome c6-ferredoxin oxidoreductase, converting photonic excitation into a charge separation, which transfers an electron from the donor P700 chlorophyll pair to the spectroscopically characterized acceptors A0, A1, FX, FA and FB in turn. In Rippkaea orientalis (strain PCC 8801 / RF-1) (Cyanothece sp. (strain PCC 8801)), this protein is Photosystem I iron-sulfur center.